The primary structure comprises 547 residues: MSSAKLGSASEDVSRRDANYHPTVWGDFFLTHSSNFLENNDSILEKHEELKQEVRNLLVVETSDLPSKIQLTDEIIRLGVGYHFETEIKAQLEKLHDHQLHLNFDLLTTSVWFRLLRGHGFSIPSDVFKRFKNTKGEFETEDARTLWCLYEATHLRVDGEDILEEAIQFSRKRLEALLPKLSFPLSECVRDALHIPYHRNVQRLAARQYIPQYDAEQTKIESLSLFAKIDFNMLQALHQSELREASRWWKEFDFPSKLPYARDRIAEGYYWMMGAHFEPKFSLSRKFLNRIVGITSLIDDTYDVYGTLEEVTLFTEAVERWDIEAVKDIPKYMQVIYIGMLGIFEDFKDNLINARGKDYCIDYAIEVFKEIVRSYQREAEYFHTGYVPSYDEYMENSIISGGYKMFIILMLIGRGEFELKETLDWASTIPEMVKASSLIARYIDDLQTYKAEEERGETVSAVRCYMREFGVSEEQACKKMREMIEIEWKRLNKTTLEADEISSSVVIPSLNFTRVLEVMYDKGDGYSDSQGVTKDRIAALLRHAIEI.

Mg(2+) is bound by residues D299, D303, and D444. A DDXXD motif motif is present at residues D299–D303.

The protein belongs to the terpene synthase family. Requires Mg(2+) as cofactor.

It catalyses the reaction (2E,6E)-farnesyl diphosphate = delta-guaiene + diphosphate. It carries out the reaction (2E,6E)-farnesyl diphosphate = alpha-guaiene + diphosphate. It functions in the pathway secondary metabolite biosynthesis; terpenoid biosynthesis. In terms of biological role, sesquiterpene synthase involved in the biosynthesis of delta-guaiene (53.7%) and alpha-guaiene (44.6%), two structures composed of five- and seven-membered rings. Also produces 1.7% of alpha-humulene. The polypeptide is Delta-guaiene synthase 2 (C3) (Aquilaria crassna (Eagle wood)).